An 807-amino-acid chain; its full sequence is Phenylalanine--tRNA ligase beta subunit (807 aa).

Residues 39 to 153 enclose the tRNA-binding domain; that stretch reads SARSQGVVVG…EIPAVGTPVA (115 aa). The B5 domain maps to 407–491; the sequence is RTPVPLQLRR…RLVGFDKFGS (85 aa). Positions 469, 475, 478, and 479 each coordinate Mg(2+). Positions 713 to 806 constitute an FDX-ACB domain; sequence PTVPASERDL…LSKQFKAELR (94 aa).

This sequence belongs to the phenylalanyl-tRNA synthetase beta subunit family. Type 1 subfamily. Tetramer of two alpha and two beta subunits. Requires Mg(2+) as cofactor.

It is found in the cytoplasm. The enzyme catalyses tRNA(Phe) + L-phenylalanine + ATP = L-phenylalanyl-tRNA(Phe) + AMP + diphosphate + H(+). The polypeptide is Phenylalanine--tRNA ligase beta subunit (Synechococcus sp. (strain CC9902)).